A 519-amino-acid polypeptide reads, in one-letter code: MSGAKQCPDCGSSDIVEDAHYSQDQVVCADCGCILSEGLITTTAAEESHLQAVRFADSTGENDSMTVSKLRGIVRVRNICRVLRLPDGFSDTAVSYYEQAYKHPLYHSVSIEKKEIIVGCCVYITCRQHQWPITMATICSLVYAKKELFASIFLSIVQVLKLDVPSVSLQNLVMSHCRSFKLFKDSCEVPSHYAEKLDTVSERTVQTVELAYETWLVTGRHPIPIITAAAYISWQSLLPARRLSCSLSRFCKLSDVDLPPPSAIRLRELQGTLIKLSVYLPWLKVLSLNKKTVVQHLGDLLRHRVFLLRKALAVTEAELSRGTLADTEAQLSRGTLADTEAQLSRGTLADTEAQLSRGTLADTEAQLSRGTLADTEAQLSRGTLADTEAQLSRGTLADTEAQLSRGTLADTEAQLSRGTLADTVAQLSRGTLADTEAQLSRGTKALSSNDQPNSTFVFLPPCVSNPRKRSRSIPFPRGHLDITGDEDISDSEIEQYLRTPAEMKEFEQALNRDDELPNA.

A TFIIB-type zinc finger spans residues 3 to 36; sequence GAKQCPDCGSSDIVEDAHYSQDQVVCADCGCILS. Residues C7, C10, C28, and C31 each coordinate Zn(2+). Copy 2 of the repeat occupies 173-249; sequence VMSHCRSFKL…ARRLSCSLSR (77 aa). C462 is modified (cysteine sulfenic acid (-SOH)). The segment at 465–487 is disordered; sequence NPRKRSRSIPFPRGHLDITGDED.

This sequence belongs to the TFIIB family. In terms of assembly, component of TFIIIB complexes. Interacts with TBP and forms a ternary complex with TBp and target DNA sequences. Post-translationally, in response to oxidative stress, a Cys-residue is reversibly oxidized to cysteine sulfenic acid. This impairs formation of a ternary complex with TBP and DNA and down-regulates expression of target genes in response to oxidative stress.

The protein resides in the nucleus. In terms of biological role, general activator of RNA polymerase III transcription. Factor exclusively required for RNA polymerase III transcription of genes with promoter elements upstream of the initiation sites. Contributes to the regulation of gene expression; functions as activator in the absence of oxidative stress. Down-regulates expression of target genes in response to oxidative stress. Overexpression protects cells against apoptosis in response to oxidative stress. The polypeptide is Transcription factor IIIB 50 kDa subunit (brf2) (Xenopus tropicalis (Western clawed frog)).